A 491-amino-acid polypeptide reads, in one-letter code: Carboxypeptidase SOL1 (491 aa).

The signal sequence occupies residues 1 to 25 (MSKLRFFQSLLISTVICFFLPSINA). The Extracellular segment spans residues 26-452 (RGGHSDHIHP…LLTQFFTETN (427 aa)). Residue N39 is glycosylated (N-linked (GlcNAc...) asparagine). The Peptidase M14 domain occupies 64 to 338 (GYMTNDDLEK…KSMLNLVASL (275 aa)). Zn(2+) contacts are provided by H125 and E128. Residues 125–128 (HGDE) and 186–187 (NR) contribute to the substrate site. H226 contributes to the Zn(2+) binding site. N268 carries N-linked (GlcNAc...) asparagine glycosylation. Y286 contributes to the substrate binding site. E308 functions as the Proton donor/acceptor in the catalytic mechanism. A helical transmembrane segment spans residues 453–470 (NGITLTLFVVVVFLCFLL). Residues 471–491 (QRRVRFNLWKQRQSSRRSITV) lie on the Cytoplasmic side of the membrane.

The protein belongs to the peptidase M14 family. Requires Zn(2+) as cofactor. Expressed in roots, shoots, leaves, flowers and siliques.

It localises to the endosome membrane. Functionally, possesses in vitro carboxypeptidase activity against the C-terminal arginine and lysine residues. Involved in the maturation of CLE19. Removes the C-terminal arginine residue of CLE19 proprotein. The cleavage of the C-terminal arginine residue is necessary for CLE19 activity in vivo. Is not involved in generating active CLV3. Is not involved in CLE19 or CLV3 perception. The chain is Carboxypeptidase SOL1 from Arabidopsis thaliana (Mouse-ear cress).